The sequence spans 282 residues: Ribosomal RNA small subunit methyltransferase I (282 aa).

The protein belongs to the methyltransferase superfamily. RsmI family.

Its subcellular location is the cytoplasm. The enzyme catalyses cytidine(1402) in 16S rRNA + S-adenosyl-L-methionine = 2'-O-methylcytidine(1402) in 16S rRNA + S-adenosyl-L-homocysteine + H(+). Its function is as follows. Catalyzes the 2'-O-methylation of the ribose of cytidine 1402 (C1402) in 16S rRNA. The sequence is that of Ribosomal RNA small subunit methyltransferase I from Pseudomonas aeruginosa (strain ATCC 15692 / DSM 22644 / CIP 104116 / JCM 14847 / LMG 12228 / 1C / PRS 101 / PAO1).